The primary structure comprises 428 residues: tRNA modification GTPase MnmE (428 aa).

The (6S)-5-formyl-5,6,7,8-tetrahydrofolate site is built by R20, E77, and K117. Residues 213-351 (GFEVAIVGSP…LVSRISDTLR (139 aa)) form the TrmE-type G domain. Residues 223 to 228 (NVGKST), 242 to 248 (SEYAGTT), and 267 to 270 (DTAG) each bind GTP. Mg(2+) is bound by residues S227 and T248. K428 serves as a coordination point for (6S)-5-formyl-5,6,7,8-tetrahydrofolate.

It belongs to the TRAFAC class TrmE-Era-EngA-EngB-Septin-like GTPase superfamily. TrmE GTPase family. As to quaternary structure, homodimer. Heterotetramer of two MnmE and two MnmG subunits. K(+) is required as a cofactor.

The protein localises to the cytoplasm. Its function is as follows. Exhibits a very high intrinsic GTPase hydrolysis rate. Involved in the addition of a carboxymethylaminomethyl (cmnm) group at the wobble position (U34) of certain tRNAs, forming tRNA-cmnm(5)s(2)U34. The sequence is that of tRNA modification GTPase MnmE from Ruegeria sp. (strain TM1040) (Silicibacter sp.).